We begin with the raw amino-acid sequence, 156 residues long: Ribonuclease H (156 aa).

The region spanning 1–142 (MNKQVEIFTD…CDELARQAAE (142 aa)) is the RNase H type-1 domain. 4 residues coordinate Mg(2+): D10, E48, D70, and D134. The tract at residues 135-156 (ELARQAAENPTEDDIGYQPEPQ) is disordered.

Belongs to the RNase H family. Monomer. It depends on Mg(2+) as a cofactor.

It localises to the cytoplasm. The catalysed reaction is Endonucleolytic cleavage to 5'-phosphomonoester.. Its function is as follows. Endonuclease that specifically degrades the RNA of RNA-DNA hybrids. This Vibrio cholerae serotype O1 (strain M66-2) protein is Ribonuclease H.